A 110-amino-acid polypeptide reads, in one-letter code: Nucleoid-associated protein Sfri_2406 (110 aa).

Belongs to the YbaB/EbfC family. Homodimer.

The protein resides in the cytoplasm. It localises to the nucleoid. Binds to DNA and alters its conformation. May be involved in regulation of gene expression, nucleoid organization and DNA protection. In Shewanella frigidimarina (strain NCIMB 400), this protein is Nucleoid-associated protein Sfri_2406.